The sequence spans 67 residues: DNA-directed RNA polymerase subunit omega (67 aa).

Belongs to the RNA polymerase subunit omega family. The RNAP catalytic core consists of 2 alpha, 1 beta, 1 beta' and 1 omega subunit. When a sigma factor is associated with the core the holoenzyme is formed, which can initiate transcription.

It carries out the reaction RNA(n) + a ribonucleoside 5'-triphosphate = RNA(n+1) + diphosphate. Functionally, promotes RNA polymerase assembly. Latches the N- and C-terminal regions of the beta' subunit thereby facilitating its interaction with the beta and alpha subunits. In Paracidovorax citrulli (strain AAC00-1) (Acidovorax citrulli), this protein is DNA-directed RNA polymerase subunit omega.